The following is a 366-amino-acid chain: 3-dehydroquinate synthase (366 aa).

NAD(+)-binding positions include 69–74 (DGEAYK), 103–107 (GVIGD), 127–128 (TT), Lys140, and Lys149. Residues Glu182, His245, and His262 each coordinate Zn(2+).

This sequence belongs to the sugar phosphate cyclases superfamily. Dehydroquinate synthase family. It depends on Co(2+) as a cofactor. The cofactor is Zn(2+). NAD(+) is required as a cofactor.

The protein resides in the cytoplasm. The enzyme catalyses 7-phospho-2-dehydro-3-deoxy-D-arabino-heptonate = 3-dehydroquinate + phosphate. Its pathway is metabolic intermediate biosynthesis; chorismate biosynthesis; chorismate from D-erythrose 4-phosphate and phosphoenolpyruvate: step 2/7. In terms of biological role, catalyzes the conversion of 3-deoxy-D-arabino-heptulosonate 7-phosphate (DAHP) to dehydroquinate (DHQ). The sequence is that of 3-dehydroquinate synthase from Pseudomonas fluorescens (strain ATCC BAA-477 / NRRL B-23932 / Pf-5).